The primary structure comprises 271 residues: Eukaryotic translation initiation factor 3 subunit G (271 aa).

Disordered stretches follow at residues 1 to 29 (MPALDDIKSSWADEVESDSGSLPPPSEVI) and 143 to 185 (KPTK…MRGR). An RRM domain is found at 189-267 (SAIRISNLSE…LILSVEWSKP (79 aa)).

It belongs to the eIF-3 subunit G family. In terms of assembly, component of the eukaryotic translation initiation factor 3 (eIF-3) complex.

The protein resides in the cytoplasm. In terms of biological role, RNA-binding component of the eukaryotic translation initiation factor 3 (eIF-3) complex, which is involved in protein synthesis of a specialized repertoire of mRNAs and, together with other initiation factors, stimulates binding of mRNA and methionyl-tRNAi to the 40S ribosome. The eIF-3 complex specifically targets and initiates translation of a subset of mRNAs involved in cell proliferation. This subunit can bind 18S rRNA. The polypeptide is Eukaryotic translation initiation factor 3 subunit G (Anopheles gambiae (African malaria mosquito)).